The chain runs to 127 residues: Basic leucine zipper transcriptional factor ATF-like 3 (127 aa).

The tract at residues 1–72 (MSQGLPAAGS…LHEEYESLEQ (72 aa)) is disordered. S2 and S31 each carry phosphoserine. One can recognise a bZIP domain in the interval 35-98 (DDRKVRRREK…KHLTEALKEH (64 aa)). Residues 37 to 62 (RKVRRREKNRVAAQRSRKKQTQKADK) form a basic motif region. Residues 58 to 67 (QKADKLHEEY) show a composition bias toward basic and acidic residues. A leucine-zipper region spans residues 63-91 (LHEEYESLEQENTMLRREIGKLTEELKHL).

It belongs to the bZIP family. In terms of assembly, heterodimer; heterodimerizes with JUN family proteins. Interacts with JUN.

Its subcellular location is the nucleus. Its function is as follows. AP-1 family transcription factor that controls the differentiation of CD8(+) thymic conventional dendritic cells in the immune system. Required for development of CD8-alpha(+) classical dendritic cells (cDCs) and related CD103(+) dendritic cells that cross-present antigens to CD8 T-cells and produce interleukin-12 (IL12) in response to pathogens. Acts via the formation of a heterodimer with JUN family proteins that recognizes and binds DNA sequence 5'-TGA[CG]TCA-3' and regulates expression of target genes. The sequence is that of Basic leucine zipper transcriptional factor ATF-like 3 (BATF3) from Homo sapiens (Human).